Here is a 455-residue protein sequence, read N- to C-terminus: Bifunctional protein GlmU (455 aa).

Positions 1–229 (MSKKVMSVVI…LNEIEGINDG (229 aa)) are pyrophosphorylase. UDP-N-acetyl-alpha-D-glucosamine is bound by residues 11 to 14 (LAAG), lysine 25, glutamine 76, 81 to 82 (GT), 103 to 105 (YGD), glycine 140, glutamate 154, asparagine 169, and asparagine 227. Position 105 (aspartate 105) interacts with Mg(2+). Position 227 (asparagine 227) interacts with Mg(2+). The tract at residues 230–250 (LQLARLERLFQKQQAEKLLLS) is linker. Residues 251–455 (GVRILDPARF…IQGWKRPKKT (205 aa)) form an N-acetyltransferase region. The UDP-N-acetyl-alpha-D-glucosamine site is built by arginine 333 and lysine 351. The active-site Proton acceptor is the histidine 363. Tyrosine 366 and asparagine 377 together coordinate UDP-N-acetyl-alpha-D-glucosamine. Acetyl-CoA-binding positions include alanine 380, 386 to 387 (NY), serine 405, alanine 423, and arginine 440.

The protein in the N-terminal section; belongs to the N-acetylglucosamine-1-phosphate uridyltransferase family. This sequence in the C-terminal section; belongs to the transferase hexapeptide repeat family. As to quaternary structure, homotrimer. Mg(2+) serves as cofactor.

Its subcellular location is the cytoplasm. The catalysed reaction is alpha-D-glucosamine 1-phosphate + acetyl-CoA = N-acetyl-alpha-D-glucosamine 1-phosphate + CoA + H(+). The enzyme catalyses N-acetyl-alpha-D-glucosamine 1-phosphate + UTP + H(+) = UDP-N-acetyl-alpha-D-glucosamine + diphosphate. It participates in nucleotide-sugar biosynthesis; UDP-N-acetyl-alpha-D-glucosamine biosynthesis; N-acetyl-alpha-D-glucosamine 1-phosphate from alpha-D-glucosamine 6-phosphate (route II): step 2/2. The protein operates within nucleotide-sugar biosynthesis; UDP-N-acetyl-alpha-D-glucosamine biosynthesis; UDP-N-acetyl-alpha-D-glucosamine from N-acetyl-alpha-D-glucosamine 1-phosphate: step 1/1. It functions in the pathway bacterial outer membrane biogenesis; LPS lipid A biosynthesis. In terms of biological role, catalyzes the last two sequential reactions in the de novo biosynthetic pathway for UDP-N-acetylglucosamine (UDP-GlcNAc). The C-terminal domain catalyzes the transfer of acetyl group from acetyl coenzyme A to glucosamine-1-phosphate (GlcN-1-P) to produce N-acetylglucosamine-1-phosphate (GlcNAc-1-P), which is converted into UDP-GlcNAc by the transfer of uridine 5-monophosphate (from uridine 5-triphosphate), a reaction catalyzed by the N-terminal domain. The chain is Bifunctional protein GlmU from Hamiltonella defensa subsp. Acyrthosiphon pisum (strain 5AT).